An 83-amino-acid chain; its full sequence is uncharacterized protein (83 aa).

Helical transmembrane passes span 23-43 (FSLWFTHITFIGLFLMFQLIK) and 56-76 (TIFVVTCIIAILLWIIYCVFL).

It is found in the cell membrane. This is an uncharacterized protein from Bacillus subtilis (strain 168).